The primary structure comprises 301 residues: Phosphonates import ATP-binding protein PhnC (301 aa).

One can recognise an ABC transporter domain in the interval 8-256 (IRIERLSKTF…LLKTLYGDEA (249 aa)). Residue 41–48 (GASGSGKS) coordinates ATP. The interval 264–287 (AQGPDDTESKNTADNTPLQDAAPA) is disordered.

Belongs to the ABC transporter superfamily. Phosphonates importer (TC 3.A.1.9.1) family. In terms of assembly, the complex is composed of two ATP-binding proteins (PhnC), two transmembrane proteins (PhnE) and a solute-binding protein (PhnD).

Its subcellular location is the cell inner membrane. It catalyses the reaction phosphonate(out) + ATP + H2O = phosphonate(in) + ADP + phosphate + H(+). Functionally, part of the ABC transporter complex PhnCDE involved in phosphonates import. Responsible for energy coupling to the transport system. This chain is Phosphonates import ATP-binding protein PhnC, found in Paraburkholderia xenovorans (strain LB400).